The sequence spans 363 residues: Dihydroorotate dehydrogenase (quinone) (363 aa).

Residues 62-66 and Thr86 each bind FMN; that span reads AGYDK. Lys66 contributes to the substrate binding site. Residue 111-115 coordinates substrate; sequence NRLGF. Residues Asn140 and Asn171 each coordinate FMN. Asn171 is a binding site for substrate. Catalysis depends on Ser174, which acts as the Nucleophile. Asn176 provides a ligand contact to substrate. FMN is bound by residues Lys216 and Ser244. 245–246 is a binding site for substrate; the sequence is NT. FMN-binding positions include Gly266, Gly295, and 316-317; that span reads YT.

Belongs to the dihydroorotate dehydrogenase family. Type 2 subfamily. In terms of assembly, monomer. Requires FMN as cofactor.

The protein localises to the cell membrane. It catalyses the reaction (S)-dihydroorotate + a quinone = orotate + a quinol. Its pathway is pyrimidine metabolism; UMP biosynthesis via de novo pathway; orotate from (S)-dihydroorotate (quinone route): step 1/1. Catalyzes the conversion of dihydroorotate to orotate with quinone as electron acceptor. This Chelativorans sp. (strain BNC1) protein is Dihydroorotate dehydrogenase (quinone).